The primary structure comprises 532 residues: Flavin-containing monooxygenase 3 (532 aa).

FAD is bound by residues 9-13 (GAGVS), glutamate 32, 40-41 (LW), and 61-62 (NS). NADP(+) contacts are provided by residues 60-61 (TN) and 195-198 (SGCD). Serine 401 carries the post-translational modification Phosphoserine. Residues 512–532 (CHLVKLFVLPVLFIAVFLALI) form a helical membrane-spanning segment.

This sequence belongs to the FMO family. FAD serves as cofactor.

It is found in the microsome membrane. The protein localises to the endoplasmic reticulum membrane. It catalyses the reaction trimethylamine + NADPH + O2 = trimethylamine N-oxide + NADP(+) + H2O. It carries out the reaction N,N-dimethylaniline + NADPH + O2 + H(+) = N,N-dimethylaniline N-oxide + NADP(+) + H2O. The enzyme catalyses hypotaurine + NADPH + O2 + H(+) = taurine + NADP(+) + H2O. The catalysed reaction is (S)-nicotine + NADPH + O2 = trans-(S)-nicotine N(1')-oxide + NADP(+) + H2O. It catalyses the reaction albendazole + NADPH + O2 + H(+) = albendazole S-oxide + NADP(+) + H2O. In terms of biological role, essential hepatic enzyme that catalyzes the oxygenation of a wide variety of nitrogen- and sulfur-containing compounds including drugs as well as dietary compounds. Plays an important role in the metabolism of trimethylamine (TMA), via the production of trimethylamine N-oxide (TMAO) metabolite. TMA is generated by the action of gut microbiota using dietary precursors such as choline, choline containing compounds, betaine or L-carnitine. By regulating TMAO concentration, FMO3 directly impacts both platelet responsiveness and rate of thrombus formation. The sequence is that of Flavin-containing monooxygenase 3 (FMO3) from Canis lupus familiaris (Dog).